The sequence spans 619 residues: Chaperone protein HscA homolog (619 aa).

This sequence belongs to the heat shock protein 70 family.

In terms of biological role, chaperone involved in the maturation of iron-sulfur cluster-containing proteins. Has a low intrinsic ATPase activity which is markedly stimulated by HscB. The sequence is that of Chaperone protein HscA homolog from Pseudomonas paraeruginosa (strain DSM 24068 / PA7) (Pseudomonas aeruginosa (strain PA7)).